We begin with the raw amino-acid sequence, 192 residues long: Superoxide dismutase [Fe] (192 aa).

The Fe cation site is built by H26, H73, D157, and H161.

This sequence belongs to the iron/manganese superoxide dismutase family. In terms of assembly, homodimer. Fe cation serves as cofactor.

The catalysed reaction is 2 superoxide + 2 H(+) = H2O2 + O2. Functionally, destroys superoxide anion radicals which are normally produced within the cells and which are toxic to biological systems. In Pseudoalteromonas translucida (strain TAC 125), this protein is Superoxide dismutase [Fe].